Reading from the N-terminus, the 287-residue chain is tRNA uridine(34) hydroxylase (287 aa).

Positions 132–226 (EGRPVVMLDT…YFEEVGGAHY (95 aa)) constitute a Rhodanese domain. Cys-186 (cysteine persulfide intermediate) is an active-site residue.

The protein belongs to the TrhO family.

The enzyme catalyses uridine(34) in tRNA + AH2 + O2 = 5-hydroxyuridine(34) in tRNA + A + H2O. Its function is as follows. Catalyzes oxygen-dependent 5-hydroxyuridine (ho5U) modification at position 34 in tRNAs. The protein is tRNA uridine(34) hydroxylase of Paraburkholderia xenovorans (strain LB400).